Reading from the N-terminus, the 319-residue chain is Thioredoxin reductase (319 aa).

36-48 (EGFMAGGVAAGGQ) provides a ligand contact to FAD. A disulfide bridge links cysteine 144 with cysteine 147. 289-298 (DVQDKVYRQA) lines the FAD pocket.

This sequence belongs to the class-II pyridine nucleotide-disulfide oxidoreductase family. Homodimer. FAD is required as a cofactor.

The catalysed reaction is [thioredoxin]-dithiol + NADP(+) = [thioredoxin]-disulfide + NADPH + H(+). This chain is Thioredoxin reductase (trrA), found in Dictyostelium discoideum (Social amoeba).